A 327-amino-acid polypeptide reads, in one-letter code: Annexin A8 (327 aa).

4 Annexin repeats span residues Phe21–Tyr92, Pro93–Gln164, Gly177–Lys249, and Asn253–Gly324. Residues Met266, Gly268, Gly270, and Asp310 each contribute to the Ca(2+) site.

The protein belongs to the annexin family.

This protein is an anticoagulant protein that acts as an indirect inhibitor of the thromboplastin-specific complex, which is involved in the blood coagulation cascade. In Pan troglodytes (Chimpanzee), this protein is Annexin A8 (ANXA8).